We begin with the raw amino-acid sequence, 292 residues long: ABC transporter ATP-binding protein YtrB (292 aa).

The 226-residue stretch at 2–227 folds into the ABC transporter domain; that stretch reads IELRQLSKAI…YIKIQMAFDT (226 aa). Position 34-41 (34-41) interacts with ATP; that stretch reads GRNGSGKT.

The protein belongs to the ABC transporter superfamily. In terms of assembly, the complex is composed of 2 ATP-binding proteins (YtrB and YtrE), 2 transmembrane proteins (YtrC and YtrD) and a solute-binding protein (YtrF).

The protein localises to the cell membrane. Functionally, part of the ABC transporter complex YtrBCDEF that plays a role in acetoin utilization during stationary phase and sporulation. This is ABC transporter ATP-binding protein YtrB (ytrB) from Bacillus subtilis (strain 168).